Consider the following 62-residue polypeptide: Cytochrome c oxidase copper chaperone (62 aa).

S13 is modified (phosphoserine). An N6-acetyllysine modification is found at K17. The Cu cation site is built by C22 and C23. The 41-residue stretch at C22–I62 folds into the CHCH domain. 2 consecutive short sequence motifs (cx9C motif) follow at residues C25 to C35 and C44 to C54. Cystine bridges form between C25-C54 and C35-C44. K29 is subject to N6-acetyllysine.

The protein belongs to the COX17 family. In terms of assembly, interacts with COA1. Interacts with the chaperone CHCHD4; this is important for correct folding and the formation of disulfide bonds that stabilize the structure. Acetylation by KAT8 promotes assembly of the mitochondrial respiratory chain complex IV (CIV).

It localises to the mitochondrion intermembrane space. It is found in the cytoplasm. In terms of biological role, copper metallochaperone essential for the assembly of the mitochondrial respiratory chain complex IV (CIV), also known as cytochrome c oxidase. Binds two copper ions and delivers them to the metallochaperone SCO1 which transports the copper ions to the Cu(A) site on the cytochrome c oxidase subunit II (MT-CO2/COX2). The sequence is that of Cytochrome c oxidase copper chaperone (COX17) from Sus scrofa (Pig).